Reading from the N-terminus, the 338-residue chain is DNA-directed RNA polymerase subunit alpha (338 aa).

Residues 1-234 form an alpha N-terminal domain (alpha-NTD) region; the sequence is MIHKNWAELI…DQLSIFVNFE (234 aa). The interval 250-338 is alpha C-terminal domain (alpha-CTD); sequence FNPLLLKKVD…DLAKRFEDQF (89 aa).

This sequence belongs to the RNA polymerase alpha chain family. As to quaternary structure, homodimer. The RNAP catalytic core consists of 2 alpha, 1 beta, 1 beta' and 1 omega subunit. When a sigma factor is associated with the core the holoenzyme is formed, which can initiate transcription.

It carries out the reaction RNA(n) + a ribonucleoside 5'-triphosphate = RNA(n+1) + diphosphate. In terms of biological role, DNA-dependent RNA polymerase catalyzes the transcription of DNA into RNA using the four ribonucleoside triphosphates as substrates. This is DNA-directed RNA polymerase subunit alpha from Cereibacter sphaeroides (strain ATCC 17029 / ATH 2.4.9) (Rhodobacter sphaeroides).